The primary structure comprises 182 residues: UPF0397 protein BT9727_2423 (182 aa).

The next 5 membrane-spanning stretches (helical) occupy residues 9-29, 40-60, 71-91, 114-134, and 142-162; these read VVAIGIGSALYGILGLWGFSI, AILTVFGALFGPVAGLLIGLI, WGIWWGWVISSGIIGFTMGFI, ITGLIGIVIAIIFAGAFDIIV, and IVIQVLGATIADVIVFLVLGL.

The protein belongs to the UPF0397 family.

It is found in the cell membrane. This Bacillus thuringiensis subsp. konkukian (strain 97-27) protein is UPF0397 protein BT9727_2423.